We begin with the raw amino-acid sequence, 847 residues long: Alanine--tRNA ligase (847 aa).

Positions 554, 558, 656, and 660 each coordinate Zn(2+).

Belongs to the class-II aminoacyl-tRNA synthetase family. It depends on Zn(2+) as a cofactor.

The protein resides in the cytoplasm. It carries out the reaction tRNA(Ala) + L-alanine + ATP = L-alanyl-tRNA(Ala) + AMP + diphosphate. Catalyzes the attachment of alanine to tRNA(Ala) in a two-step reaction: alanine is first activated by ATP to form Ala-AMP and then transferred to the acceptor end of tRNA(Ala). Also edits incorrectly charged Ser-tRNA(Ala) and Gly-tRNA(Ala) via its editing domain. The chain is Alanine--tRNA ligase from Helicobacter pylori (strain ATCC 700392 / 26695) (Campylobacter pylori).